The primary structure comprises 67 residues: Large ribosomal subunit protein bL28 (67 aa).

This sequence belongs to the bacterial ribosomal protein bL28 family.

In Nitratiruptor sp. (strain SB155-2), this protein is Large ribosomal subunit protein bL28.